A 340-amino-acid chain; its full sequence is MNAPHMHDTAADGAAIEATVADIADTGRRALTRREQKEAYENNKLFKRIVRQVGQAIGDYNMIEQGDKVMVCLSGGKDSYAMLDVLLRLRERAPIDFDIVAVNLDQKQPGFPEHVLPEYLTQIGVPFHIENQDTYSIVKRLVPEGKTTCSLCSRLRRGILYRVAGELGATKIALGHHRDDILQTLLLNMFYGGKLKGMPPKLQSDDGKNVVIRPLAYVKETDLEKFAELREFPIIPCNLCGSQPNLKRAEMKALIRDWDKRFPGRVDNMFSALANVVPSHLMDTTQFPFASLRATGQADPQGDIAFDEEPCASGDDTAATRDGARPIAARPISIVQFDDL.

Positions 74-79 match the PP-loop motif motif; it reads SGGKDS. [4Fe-4S] cluster contacts are provided by C149, C152, and C240.

It belongs to the TtcA family. As to quaternary structure, homodimer. It depends on Mg(2+) as a cofactor. Requires [4Fe-4S] cluster as cofactor.

It is found in the cytoplasm. It carries out the reaction cytidine(32) in tRNA + S-sulfanyl-L-cysteinyl-[cysteine desulfurase] + AH2 + ATP = 2-thiocytidine(32) in tRNA + L-cysteinyl-[cysteine desulfurase] + A + AMP + diphosphate + H(+). Its pathway is tRNA modification. Functionally, catalyzes the ATP-dependent 2-thiolation of cytidine in position 32 of tRNA, to form 2-thiocytidine (s(2)C32). The sulfur atoms are provided by the cysteine/cysteine desulfurase (IscS) system. This is tRNA-cytidine(32) 2-sulfurtransferase from Burkholderia ambifaria (strain MC40-6).